Reading from the N-terminus, the 180-residue chain is uncharacterized protein (180 aa).

Positions 1 to 24 are cleaved as a signal peptide; that stretch reads MKKKTIFQCVILFFSILNIHVGMA.

In terms of biological role, part of the elfADCG-ycbUVF fimbrial operon, which promotes adhesion of bacteria to different abiotic surfaces. This is an uncharacterized protein from Escherichia coli (strain K12).